We begin with the raw amino-acid sequence, 354 residues long: Sulfate/thiosulfate import ATP-binding protein CysA (354 aa).

Residues 3 to 237 enclose the ABC transporter domain; that stretch reads IEVRGLSKRF…PATPFVYGFL (235 aa). 35 to 42 lines the ATP pocket; the sequence is GPSGCGKT.

This sequence belongs to the ABC transporter superfamily. Sulfate/tungstate importer (TC 3.A.1.6) family. The complex is composed of two ATP-binding proteins (CysA), two transmembrane proteins (CysT and CysW) and a solute-binding protein (CysP).

It is found in the cell inner membrane. The catalysed reaction is sulfate(out) + ATP + H2O = sulfate(in) + ADP + phosphate + H(+). It catalyses the reaction thiosulfate(out) + ATP + H2O = thiosulfate(in) + ADP + phosphate + H(+). In terms of biological role, part of the ABC transporter complex CysAWTP involved in sulfate/thiosulfate import. Responsible for energy coupling to the transport system. The sequence is that of Sulfate/thiosulfate import ATP-binding protein CysA from Bordetella pertussis (strain Tohama I / ATCC BAA-589 / NCTC 13251).